The following is a 579-amino-acid chain: Protein alan shepard (579 aa).

The segment covering 1–12 (MHPRYSPAPPPQ) has biased composition (pro residues). The tract at residues 1–66 (MHPRYSPAPP…GSSSSAAAAP (66 aa)) is disordered. Position 5 is a phosphotyrosine (Tyr-5). Low complexity predominate over residues 13–24 (QQQQMGGPPHQQ). The segment covering 25–35 (QGGGGGGGGSM) has biased composition (gly residues). Polar residues predominate over residues 37–54 (GPSNAQQLPPQIPRSQNY). Positions 55-66 (SNGSSSSAAAAP) are enriched in low complexity. A phosphotyrosine mark is found at Tyr-125 and Tyr-142. The interval 164–225 (PATTTYGQRV…TVQNQNQQGG (62 aa)) is disordered. Positions 178–225 (SPSNTNSSSSSNTGSQSGTLSTSLSNTTNTNTNMGPNGTVQNQNQQGG) are enriched in low complexity. RRM domains are found at residues 231 to 304 (TNLY…MAKQ) and 310 to 389 (TNLY…FADG). A disordered region spans residues 553–579 (MTDSEQASTAASPDEAYTQYPHQAAPK).

In terms of biological role, has a role in the perception of gravity. This is Protein alan shepard from Drosophila sechellia (Fruit fly).